Here is a 935-residue protein sequence, read N- to C-terminus: Epstein-Barr nuclear antigen 3 (935 aa).

Disordered stretches follow at residues 1-89 (MDKD…DLPG), 342-373 (HVEG…VSRG), 399-446 (TEQG…VPEP), 611-634 (KQAS…MEGP), and 883-908 (HGRP…DHEP). A compositionally biased stretch (acidic residues) spans 10–19 (ALDDNMEEEV). A compositionally biased stretch (polar residues) spans 20–29 (PSTSVVQEQV). The span at 352 to 366 (EESEDTESDGDDEDL) shows a compositional bias: acidic residues. Over residues 399–410 (TEQGKEVLEKAR) the composition is skewed to basic and acidic residues. Over residues 431–440 (SDETATSHGS) the composition is skewed to polar residues. Over residues 615–630 (VEVQPPQVTQVSPQQP) the composition is skewed to low complexity.

The protein belongs to the herpesviridae EBNA-3 family. Interacts with human UCKL1. Interacts with host CTPB1; this interaction seems important for EBNA3-mediated transcriptional repression. Interacts with host RBPJ. Interacts with host USP12 and WDR48; these interactions form a deubiquitination-competent complex.

The protein localises to the host nucleus matrix. Its function is as follows. Plays an essential role for activation and immortalization of human B-cells. Represses transcription of viral promoters TP1 and Cp through interaction with host RBPJ, and inhibits EBNA2-mediated activation of these promoters. Since Cp is the promoter for all EBNA mRNAs, EBNA3A probably contributes to a negative autoregulatory control loop. The chain is Epstein-Barr nuclear antigen 3 (EBNA3) from Homo sapiens (Human).